Here is a 156-residue protein sequence, read N- to C-terminus: Ribonuclease pancreatic (156 aa).

The N-terminal stretch at 1 to 28 (MALEKSLVLLPLLVLALLVLGWIQPSLG) is a signal peptide. Residues Lys35 and Arg38 each contribute to the substrate site. The Proton acceptor role is filled by His40. Disulfide bonds link Cys54–Cys112, Cys68–Cys123, Cys86–Cys138, and Cys93–Cys100. Residue Asn62 is glycosylated (N-linked (GlcNAc...) asparagine). 69-73 (KPVNT) provides a ligand contact to substrate. Asn90 carries an N-linked (GlcNAc...) asparagine glycan. Lys94 serves as a coordination point for substrate. A glycan (N-linked (GlcNAc...) asparagine) is linked at Asn104. Substrate is bound at residue Arg113. The Proton donor role is filled by His147.

This sequence belongs to the pancreatic ribonuclease family. In terms of assembly, monomer. Interacts with and forms tight 1:1 complexes with RNH1. Dimerization of two such complexes may occur. Interaction with RNH1 inhibits this protein.

It localises to the secreted. The catalysed reaction is an [RNA] containing cytidine + H2O = an [RNA]-3'-cytidine-3'-phosphate + a 5'-hydroxy-ribonucleotide-3'-[RNA].. It carries out the reaction an [RNA] containing uridine + H2O = an [RNA]-3'-uridine-3'-phosphate + a 5'-hydroxy-ribonucleotide-3'-[RNA].. Endonuclease that catalyzes the cleavage of RNA on the 3' side of pyrimidine nucleotides. Acts on single-stranded and double-stranded RNA. The chain is Ribonuclease pancreatic (RNASE1) from Lemur catta (Ring-tailed lemur).